The sequence spans 353 residues: MLVSDYHFDLPDSLIANYPMPDRTASRLLHLDGHSGEVVHRQFPDVLDLVQPGDLMVFNNTRVIPARVFGQKESGGKVEILVERVINVNEALAHVRASKSPKESSKLILGQDKGEHIEATMIGRSGALFHLVFDEPVLDVLMRAGHMPLPPYIERPDEDSDQERYQTVYNQKPGAVAAPTAGLHFDEALLEKLKAKGVETAFVTLHVGAGTFQPMKVENVKDHIMHAEYVEVEPSVVEQVKAAKARGGRVIAVGTTSVRSLESASQSGEIAPMQGDTSIFIYPGYEFKTVDALVTNFHLPESTLIMLISAFAGYDHVMAAYKKAVEQKYRFFSYGDAMFVTRNPQAKGPQGEE.

This sequence belongs to the QueA family. Monomer.

The protein localises to the cytoplasm. It catalyses the reaction 7-aminomethyl-7-carbaguanosine(34) in tRNA + S-adenosyl-L-methionine = epoxyqueuosine(34) in tRNA + adenine + L-methionine + 2 H(+). It participates in tRNA modification; tRNA-queuosine biosynthesis. Its function is as follows. Transfers and isomerizes the ribose moiety from AdoMet to the 7-aminomethyl group of 7-deazaguanine (preQ1-tRNA) to give epoxyqueuosine (oQ-tRNA). This chain is S-adenosylmethionine:tRNA ribosyltransferase-isomerase, found in Marinomonas sp. (strain MWYL1).